Reading from the N-terminus, the 155-residue chain is NADPH-dependent 7-cyano-7-deazaguanine reductase (155 aa).

Cys-53 functions as the Thioimide intermediate in the catalytic mechanism. Catalysis depends on Asp-60, which acts as the Proton donor. Substrate contacts are provided by residues 75 to 77 (VES) and 94 to 95 (HE).

Belongs to the GTP cyclohydrolase I family. QueF type 1 subfamily.

It is found in the cytoplasm. The enzyme catalyses 7-aminomethyl-7-carbaguanine + 2 NADP(+) = 7-cyano-7-deazaguanine + 2 NADPH + 3 H(+). It participates in tRNA modification; tRNA-queuosine biosynthesis. Functionally, catalyzes the NADPH-dependent reduction of 7-cyano-7-deazaguanine (preQ0) to 7-aminomethyl-7-deazaguanine (preQ1). The chain is NADPH-dependent 7-cyano-7-deazaguanine reductase from Hyphomonas neptunium (strain ATCC 15444).